A 136-amino-acid polypeptide reads, in one-letter code: Holo-[acyl-carrier-protein] synthase (136 aa).

Asp8 and Glu57 together coordinate Mg(2+).

The protein belongs to the P-Pant transferase superfamily. AcpS family. Mg(2+) is required as a cofactor.

It localises to the cytoplasm. It carries out the reaction apo-[ACP] + CoA = holo-[ACP] + adenosine 3',5'-bisphosphate + H(+). Functionally, transfers the 4'-phosphopantetheine moiety from coenzyme A to a Ser of acyl-carrier-protein. The protein is Holo-[acyl-carrier-protein] synthase of Methylobacterium radiotolerans (strain ATCC 27329 / DSM 1819 / JCM 2831 / NBRC 15690 / NCIMB 10815 / 0-1).